The following is a 335-amino-acid chain: Biotin synthase (335 aa).

The 229-residue stretch at 46 to 274 (YNIQLASLFS…KSKIRLSAGR (229 aa)) folds into the Radical SAM core domain. Residues cysteine 61, cysteine 65, and cysteine 68 each contribute to the [4Fe-4S] cluster site. Residues cysteine 105, cysteine 137, cysteine 197, and arginine 269 each contribute to the [2Fe-2S] cluster site.

Belongs to the radical SAM superfamily. Biotin synthase family. Homodimer. The cofactor is [4Fe-4S] cluster. Requires [2Fe-2S] cluster as cofactor.

It catalyses the reaction (4R,5S)-dethiobiotin + (sulfur carrier)-SH + 2 reduced [2Fe-2S]-[ferredoxin] + 2 S-adenosyl-L-methionine = (sulfur carrier)-H + biotin + 2 5'-deoxyadenosine + 2 L-methionine + 2 oxidized [2Fe-2S]-[ferredoxin]. It functions in the pathway cofactor biosynthesis; biotin biosynthesis; biotin from 7,8-diaminononanoate: step 2/2. In terms of biological role, catalyzes the conversion of dethiobiotin (DTB) to biotin by the insertion of a sulfur atom into dethiobiotin via a radical-based mechanism. The protein is Biotin synthase of Prochlorococcus marinus (strain AS9601).